Reading from the N-terminus, the 586-residue chain is MPKPINVRVTTMDAELEFAVQPNTTGKQLFDQVVKTIGLREVWYFGLQYVDNKGFPTWLKLDKKVSAQEVRKENPVQFKFRAKFYPEDVSEELIQDITQKLFFLQVKEGILSDEIYCPPETAVLLGSYAVQAKFGDYSKEAHKAGYLSSERLIPQRVMDQHKLSRDQWEDRIQVWHAEHRGMLKDSAMLEYLKIAQDLEMYGINYFEIKNKKGTDLWLGVDALGLNIYEKNDKLTPKIGFPWSEIRNISFNDKKFVIKPIDKKAPDFVFYAPRLRINKRILQLCMGNHELYMRRRKPDTIEVQQMKAQAREEKHQKQLERQQLESEKKRREAVEQEKEQMLREKEELMMRLQDYEQKTKKAEKELSDQIQRALQLEDERKRAQEESERLEADRVAALRAKEELERQAADQIKSQEQLAAELAEYTAKIALLEEARRRKESEVEEWQHRAREAQDDLVKTKEELHLVMTAPPPPPPPMYEPVSYHVQEHLHEEGAESLGYSAELSSEGILDDRHEEKRITEAEKNERVQRQLLTLSNELSQARDENKRTHNDIIHNENLRQGRDKYKTLRQIRQGNTKQRIDEFEAM.

Residues proline 2–arginine 295 enclose the FERM domain. Residue lysine 60 is modified to N6-acetyllysine. The short motif at isoleucine 115 to glutamate 120 is the [IL]-x-C-x-x-[DE] motif element. At tyrosine 146 the chain carries Phosphotyrosine; by PDGFR. An interaction with SCYL3 region spans residues glutamate 244–methionine 586. Residues valine 302–glutamate 462 are a coiled coil. The segment at methionine 305–methionine 340 is disordered. Positions glutamine 308 to methionine 340 are enriched in basic and acidic residues. Phosphotyrosine; by PDGFR is present on tyrosine 354. Serine 366 carries the post-translational modification Phosphoserine. Residue tyrosine 478 is modified to Phosphotyrosine. A Phosphoserine modification is found at serine 535. Residue threonine 567 is modified to Phosphothreonine; by ROCK2 and PKC/PRKCI.

As to quaternary structure, interacts with PALS1. Found in a complex with EZR, PODXL and NHERF2. Interacts with MCC, PLEKHG6, PODXL, SCYL3/PACE1, NHERF1, NHERF2 and TMEM8B. Interacts (when phosphorylated) with FES/FPS. Interacts with dimeric S100P, the interaction may be activating through unmasking of F-actin binding sites. Identified in complexes that contain VIM, EZR, AHNAK, BFSP1, BFSP2, ANK2, PLEC, PRX and spectrin. Detected in a complex composed of at least EZR, AHNAK, PPL and PRX. Interacts with PDPN (via cytoplasmic domain); activates RHOA and promotes epithelial-mesenchymal transition. Interacts with SPN/CD43 cytoplasmic tail, CD44 and ICAM2. Interacts with SLC9A3; interaction targets SLC9A3 to the apical membrane. Interacts with SLC9A1; regulates interactions of SLC9A1 with cytoskeletal and promotes stress fiber formation. Interacts with CLIC5; may work together in a complex which also includes RDX and MYO6 to stabilize linkages between the plasma membrane and subjacent actin cytoskeleton at the base of stereocilia. Phosphorylated by tyrosine-protein kinases. Phosphorylation by ROCK2 suppresses the head-to-tail association of the N-terminal and C-terminal halves resulting in an opened conformation which is capable of actin and membrane-binding. Post-translationally, S-nitrosylation is induced by interferon-gamma and oxidatively-modified low-densitity lipoprotein (LDL(ox)) possibly implicating the iNOS-S100A8/9 transnitrosylase complex.

It is found in the apical cell membrane. The protein resides in the cell projection. The protein localises to the microvillus membrane. It localises to the ruffle membrane. Its subcellular location is the cytoplasm. It is found in the cell cortex. The protein resides in the cytoskeleton. The protein localises to the microvillus. A head-to-tail association, of the N-terminal and C-terminal halves results in a closed conformation (inactive form) which is incapable of actin or membrane-binding. Its function is as follows. Probably involved in connections of major cytoskeletal structures to the plasma membrane. In epithelial cells, required for the formation of microvilli and membrane ruffles on the apical pole. Along with PLEKHG6, required for normal macropinocytosis. The protein is Ezrin (EZR) of Oryctolagus cuniculus (Rabbit).